Consider the following 408-residue polypeptide: Sex comb on midleg-like protein 4 (408 aa).

Phosphoserine is present on residues S55 and S65. Residues 274–338 (AGGPATTTSG…TRRPSSRNPS (65 aa)) form a disordered region. A compositionally biased stretch (polar residues) spans 278–287 (ATTTSGSRTN). The segment covering 288–306 (PVPSGGSSSPGLRLPASSP) has biased composition (low complexity). The 67-residue stretch at 340–406 (WTVEDVVRFV…CYHIDKLKQA (67 aa)) folds into the SAM domain.

The protein belongs to the SCM family.

Its subcellular location is the nucleus. Functionally, putative Polycomb group (PcG) protein. PcG proteins act by forming multiprotein complexes, which are required to maintain the transcriptionally repressive state of homeotic genes throughout development. The polypeptide is Sex comb on midleg-like protein 4 (Scml4) (Mus musculus (Mouse)).